The following is a 366-amino-acid chain: MLEKRYLVLEDGSYYEGYRLGSDDLSIGEIVFNTAMTGYQETISDPSYTGQIITFTYPLIGNYGINRDDFESLTPKLNGVVVKEASTHPSNFRHQKTLHETLAQYHIPGISGVDTRSITRKIRNHGVLRAGFTDNKDNIQELVEQLKTAELPRDEVQTVSTKTPYVSTGSDLSVVLLDFGKKQNIVRELNLRGCNVTVVPYDTSAEEILSMSPDGVMLSNGPGDPDEVDVALDMIRGILGKIPFFGICLGHQLFALSQGATSFKMKFGHRGANHPVKDLRTGKIDITSQNHGYSIDRDSLKNTDLEVTHIALNDGTVEGLRHKELPAFSVQYHPEARPGPSDSNYLFDEFITMMKDFKEKERQINA.

Residues 1–171 form a CPSase region; that stretch reads MLEKRYLVLE…KTPYVSTGSD (171 aa). L-glutamine-binding residues include Ser-47, Gly-221, and Gly-223. The Glutamine amidotransferase type-1 domain occupies 173 to 360; sequence SVVLLDFGKK…ITMMKDFKEK (188 aa). Cys-248 serves as the catalytic Nucleophile. Residues Leu-249, Gln-252, Asn-290, Gly-292, and Tyr-293 each coordinate L-glutamine. Active-site residues include His-333 and Glu-335.

This sequence belongs to the CarA family. Composed of two chains; the small (or glutamine) chain promotes the hydrolysis of glutamine to ammonia, which is used by the large (or ammonia) chain to synthesize carbamoyl phosphate. Tetramer of heterodimers (alpha,beta)4.

The enzyme catalyses hydrogencarbonate + L-glutamine + 2 ATP + H2O = carbamoyl phosphate + L-glutamate + 2 ADP + phosphate + 2 H(+). It carries out the reaction L-glutamine + H2O = L-glutamate + NH4(+). Its pathway is amino-acid biosynthesis; L-arginine biosynthesis; carbamoyl phosphate from bicarbonate: step 1/1. It participates in pyrimidine metabolism; UMP biosynthesis via de novo pathway; (S)-dihydroorotate from bicarbonate: step 1/3. In terms of biological role, small subunit of the glutamine-dependent carbamoyl phosphate synthetase (CPSase). CPSase catalyzes the formation of carbamoyl phosphate from the ammonia moiety of glutamine, carbonate, and phosphate donated by ATP, constituting the first step of 2 biosynthetic pathways, one leading to arginine and/or urea and the other to pyrimidine nucleotides. The small subunit (glutamine amidotransferase) binds and cleaves glutamine to supply the large subunit with the substrate ammonia. This is Carbamoyl phosphate synthase small chain from Staphylococcus epidermidis (strain ATCC 35984 / DSM 28319 / BCRC 17069 / CCUG 31568 / BM 3577 / RP62A).